The sequence spans 77 residues: DNA-directed RNA polymerase subunit omega (77 aa).

Belongs to the RNA polymerase subunit omega family. In terms of assembly, in cyanobacteria the RNAP catalytic core is composed of 2 alpha, 1 beta, 1 beta', 1 gamma and 1 omega subunit. When a sigma factor is associated with the core the holoenzyme is formed, which can initiate transcription.

The enzyme catalyses RNA(n) + a ribonucleoside 5'-triphosphate = RNA(n+1) + diphosphate. Promotes RNA polymerase assembly. Latches the N- and C-terminal regions of the beta' subunit thereby facilitating its interaction with the beta and alpha subunits. In Thermosynechococcus vestitus (strain NIES-2133 / IAM M-273 / BP-1), this protein is DNA-directed RNA polymerase subunit omega.